Consider the following 252-residue polypeptide: Large ribosomal subunit protein uL4 (252 aa).

This sequence belongs to the universal ribosomal protein uL4 family. Part of the 50S ribosomal subunit.

One of the primary rRNA binding proteins, this protein initially binds near the 5'-end of the 23S rRNA. It is important during the early stages of 50S assembly. It makes multiple contacts with different domains of the 23S rRNA in the assembled 50S subunit and ribosome. Its function is as follows. Forms part of the polypeptide exit tunnel. This chain is Large ribosomal subunit protein uL4, found in Methanococcus maripaludis (strain C6 / ATCC BAA-1332).